A 270-amino-acid chain; its full sequence is Karrikin insensitive 2 receptor CA (270 aa).

S95 serves as the catalytic Nucleophile. Catalysis depends on residues D217 and H246.

It belongs to the AB hydrolase superfamily. As to expression, expressed in stigma.

It localises to the nucleus. The protein resides in the cytoplasm. Functionally, hydrolase which may be involved in plant olfaction during volatile communication. In Petunia hybrida (Petunia), this protein is Karrikin insensitive 2 receptor CA.